Reading from the N-terminus, the 276-residue chain is 4-chlorobenzoyl coenzyme A dehalogenase-1 (276 aa).

Position 66-71 (66-71) interacts with substrate; it reads AGFDLE. Catalysis depends on H93, which acts as the Proton acceptor. Substrate is bound at residue G117. Catalysis depends on D148, which acts as the Nucleophile. R261 contributes to the substrate binding site.

This sequence belongs to the enoyl-CoA hydratase/isomerase family. As to quaternary structure, homotetramer.

It catalyses the reaction 4-chlorobenzoyl-CoA + H2O = 4-hydroxybenzoyl-CoA + chloride + H(+). It functions in the pathway xenobiotic degradation; 4-chlorobenzoate degradation; 4-hydroxybenzoate from 4-chlorobenzoate: step 2/3. In terms of biological role, dehalogenates 4-chlorobenzoyl-CoA, 4-iodobenzoyl-CoA, 4-bromobenzoyl-CoA and, at a slower rate, 4-fluorobenzoyl-CoA. Does not dehalogenate 2-chlorobenzoyl-CoA or 3-chlorobenzoyl-CoA. This Arthrobacter sp protein is 4-chlorobenzoyl coenzyme A dehalogenase-1.